Here is a 61-residue protein sequence, read N- to C-terminus: MAKKSLIAKSERTPKFKVRAYHRCKLCGRSRGYYRKFGLCRLCFRKHASAGSIPGIVKASW.

Positions 24, 27, 40, and 43 each coordinate Zn(2+).

This sequence belongs to the universal ribosomal protein uS14 family. Zinc-binding uS14 subfamily. As to quaternary structure, part of the 30S ribosomal subunit. Contacts proteins S3 and S10. It depends on Zn(2+) as a cofactor.

Its function is as follows. Binds 16S rRNA, required for the assembly of 30S particles and may also be responsible for determining the conformation of the 16S rRNA at the A site. The polypeptide is Small ribosomal subunit protein uS14 (Acidithiobacillus ferrooxidans (strain ATCC 23270 / DSM 14882 / CIP 104768 / NCIMB 8455) (Ferrobacillus ferrooxidans (strain ATCC 23270))).